Reading from the N-terminus, the 75-residue chain is U-stichotoxin-Hau3a (75 aa).

A signal peptide spans 1-19; sequence MNHLIILVVAAVFLGMASA. Residues 20 to 26 constitute a propeptide that is removed on maturation; that stretch reads EDVFHKR. 3 cysteine pairs are disulfide-bonded: cysteine 31/cysteine 71, cysteine 33/cysteine 61, and cysteine 54/cysteine 72.

It belongs to the sea anemone sodium channel inhibitory toxin family. Type I subfamily. Contains 3 disulfide bonds.

It is found in the secreted. The protein resides in the nematocyst. Functionally, toxin that is lethal to crab. This Heteractis aurora (Banded sea anemone) protein is U-stichotoxin-Hau3a.